The chain runs to 195 residues: E3 ubiquitin-protein ligase ZNRF1 (195 aa).

The span at 1–10 (MGGKQSSASR) shows a compositional bias: polar residues. 2 disordered regions span residues 1–36 (MGGKQSSASRSRAPFPGVSSDDSAVPPSSNFGHFRA) and 61–84 (PFGLYRAGPDTERGGSSGSEDSRG). G2 carries N-myristoyl glycine lipidation. Low complexity predominate over residues 18-29 (VSSDDSAVPPSS). The segment at 152–193 (CVICLEELSQGDTIARLPCLCIYHKSCIDSWFEVNRCCPEHP) adopts an RING-type; atypical zinc-finger fold.

Its subcellular location is the endosome. It localises to the lysosome. The protein localises to the membrane. It carries out the reaction S-ubiquitinyl-[E2 ubiquitin-conjugating enzyme]-L-cysteine + [acceptor protein]-L-lysine = [E2 ubiquitin-conjugating enzyme]-L-cysteine + N(6)-ubiquitinyl-[acceptor protein]-L-lysine.. It participates in protein modification; protein ubiquitination. Its function is as follows. E3 ubiquitin-protein ligase that plays a role in neuron cells differentiation. Plays a role in the establishment and maintenance of neuronal transmission and plasticity. This Xenopus tropicalis (Western clawed frog) protein is E3 ubiquitin-protein ligase ZNRF1 (znrf1).